Reading from the N-terminus, the 800-residue chain is Protein PET111, mitochondrial (800 aa).

To yeast YHR160C.

It localises to the mitochondrion matrix. Required for translation of the mitochondrial gene for cytochrome c oxidase subunit II (COX2). The protein is Protein PET111, mitochondrial (PET111) of Saccharomyces cerevisiae (strain ATCC 204508 / S288c) (Baker's yeast).